A 389-amino-acid polypeptide reads, in one-letter code: Alkanesulfonate monooxygenase (389 aa).

Belongs to the SsuD family.

It carries out the reaction an alkanesulfonate + FMNH2 + O2 = an aldehyde + FMN + sulfite + H2O + 2 H(+). Functionally, catalyzes the desulfonation of aliphatic sulfonates. The polypeptide is Alkanesulfonate monooxygenase (Agrobacterium fabrum (strain C58 / ATCC 33970) (Agrobacterium tumefaciens (strain C58))).